Reading from the N-terminus, the 560-residue chain is MAIATSAQLARALYDNTAESPQELSFRRGDVLRVLQREGAGGLDGWCLCSLHGQQGIVPANRVKLLPAGPAPKPSLCPASPTQPGSSCPTPERGCEEQEVYVIPPPARPCSASGLPARSCSPSSDSIYKVPRGNGMQLTASRDVAEVYDVPPNILRAPSSCPYDSPASFSCPVAPVVPQPPREDEAPYDVPLALKPPAELERDPEWEGGREPGPPLYAAPSNLKRASALLNLYEAPEELLANGESRDADEGIYDVPLLGPEPPSPEPPVASSSTDLDTVAQLPTRSSPPQHRPRLPSTESLSRRPLPALPVSEAPAPSPAPSPAPGRKGSIQDRPLPPPPPCLPGYGGLKPEGDPECREVANDPAGPHNEYEGIPMAEEYDYVHLKGVDTAQGSRPLDKAFPVDPELLERGLAERKEALSPEEPLVLSTGDLQLLHFYAGQCQSHYSALQAAVAALVASTQANQPPCLFVPHGKRVVVAAHRLVFVGDTLGRLAASAALRAQVGAAGTMLAQTLRATVLAVKGAALGYPSDTAVQEMARCVAELAGQALRFTTLLDGLLP.

Residues 5–68 (TSAQLARALY…PANRVKLLPA (64 aa)) form the SH3 domain. 2 disordered regions span residues 176–219 (VVPQ…LYAA) and 241–372 (ANGE…NEYE). Residues 198-210 (AELERDPEWEGGR) are compositionally biased toward basic and acidic residues. Position 253 is a phosphotyrosine; by SRC (Tyr253). Positions 259-268 (GPEPPSPEPP) are enriched in pro residues. 2 short sequence motifs (SH3-binding) span residues 304–310 (RPLPALP) and 334–340 (RPLPPPP). Residues 305 to 315 (PLPALPVSEAP) are compositionally biased toward low complexity. Basic and acidic residues predominate over residues 351–361 (PEGDPECREVA). The segment at 437-487 (FYAGQCQSHYSALQAAVAALVASTQANQPPCLFVPHGKRVVVAAHRLVFVG) is divergent helix-loop-helix motif.

It belongs to the CAS family. Post-translationally, phosphorylated on multiple tyrosine residues. Phosphorylated on tyrosines by FYN and SRC. Widely expressed. Higher levels found in placenta and embryo. Lower levels found in brain, brainstem, muscle and lung. No expression in liver and intestine.

In terms of biological role, docking protein which plays a central coordinating role for tyrosine-kinase-based signaling related to cell adhesion. May serve as an activator of SRC and a downstream effector. Interacts with the SH3 domain of FYN and with CRK, SRC, and YES. This chain is Embryonal Fyn-associated substrate (Efs), found in Mus musculus (Mouse).